The primary structure comprises 166 residues: Transcriptional repressor NrdR (166 aa).

The segment at 3–34 is a zinc-finger region; the sequence is CIKCGNMEDKVIDSRPIKEGKSIRRRRECLRC. Residues 49-139 enclose the ATP-cone domain; sequence LFVKKRNGSI…VYCKFHDAKD (91 aa).

Belongs to the NrdR family. Zn(2+) is required as a cofactor.

Its function is as follows. Negatively regulates transcription of bacterial ribonucleotide reductase nrd genes and operons by binding to NrdR-boxes. This chain is Transcriptional repressor NrdR, found in Methylacidiphilum infernorum (isolate V4) (Methylokorus infernorum (strain V4)).